The following is a 294-amino-acid chain: 4-hydroxy-tetrahydrodipicolinate synthase (294 aa).

T45 serves as a coordination point for pyruvate. Y133 acts as the Proton donor/acceptor in catalysis. The active-site Schiff-base intermediate with substrate is K161. Residue I203 coordinates pyruvate.

This sequence belongs to the DapA family. As to quaternary structure, homotetramer; dimer of dimers.

Its subcellular location is the cytoplasm. It catalyses the reaction L-aspartate 4-semialdehyde + pyruvate = (2S,4S)-4-hydroxy-2,3,4,5-tetrahydrodipicolinate + H2O + H(+). It participates in amino-acid biosynthesis; L-lysine biosynthesis via DAP pathway; (S)-tetrahydrodipicolinate from L-aspartate: step 3/4. Functionally, catalyzes the condensation of (S)-aspartate-beta-semialdehyde [(S)-ASA] and pyruvate to 4-hydroxy-tetrahydrodipicolinate (HTPA). This is 4-hydroxy-tetrahydrodipicolinate synthase from Buchnera aphidicola subsp. Schizaphis graminum (strain Sg).